The chain runs to 688 residues: Potassium-transporting ATPase ATP-binding subunit (688 aa).

The next 4 membrane-spanning stretches (helical) occupy residues 35-55, 62-82, 219-239, and 260-280; these read VMFVVYVGSILTTILWVQALG, AGFILAITIWLWFTVLFANFA, IALTILLVALTIVFLGVIVTL, and VLIALLVCLIPTTIAGLLSAI. Catalysis depends on D313, which acts as the 4-aspartylphosphate intermediate. ATP-binding positions include D350, E354, 383–390, and K401; that span reads FSAHTRMS. D524 and D528 together coordinate Mg(2+). The next 3 helical transmembrane spans lie at 594-614, 622-642, and 668-688; these read FAIIPAAFVTTYPQLAALNVM, AILSAVIFNALIIVFLIPLAL, and VIVPFIGIKLIDLAIAAVGLA.

Belongs to the cation transport ATPase (P-type) (TC 3.A.3) family. Type IA subfamily. As to quaternary structure, the system is composed of three essential subunits: KdpA, KdpB and KdpC.

The protein localises to the cell inner membrane. It catalyses the reaction K(+)(out) + ATP + H2O = K(+)(in) + ADP + phosphate + H(+). Functionally, part of the high-affinity ATP-driven potassium transport (or Kdp) system, which catalyzes the hydrolysis of ATP coupled with the electrogenic transport of potassium into the cytoplasm. This subunit is responsible for energy coupling to the transport system and for the release of the potassium ions to the cytoplasm. The polypeptide is Potassium-transporting ATPase ATP-binding subunit (Dechloromonas aromatica (strain RCB)).